The sequence spans 127 residues: HTH-type transcriptional regulator ImmR (127 aa).

The segment covering 1 to 12 has biased composition (basic and acidic residues); the sequence is MSLGKRLKEARQ. Residues 1–22 form a disordered region; sequence MSLGKRLKEARQKAGYTQKEAA. Positions 7–61 constitute an HTH cro/C1-type domain; it reads LKEARQKAGYTQKEAAEKLNIGNNNLSNYERDYRDPDTDTLLKLSNLYNVSTDYL. The segment at residues 18–37 is a DNA-binding region (H-T-H motif); sequence QKEAAEKLNIGNNNLSNYER.

The polypeptide is HTH-type transcriptional regulator ImmR (immR) (Bacillus subtilis (strain 168)).